We begin with the raw amino-acid sequence, 367 residues long: DNA replication and repair protein RecF (367 aa).

Residue 30–37 coordinates ATP; that stretch reads GANGSGKT.

It belongs to the RecF family.

The protein resides in the cytoplasm. Its function is as follows. The RecF protein is involved in DNA metabolism; it is required for DNA replication and normal SOS inducibility. RecF binds preferentially to single-stranded, linear DNA. It also seems to bind ATP. This is DNA replication and repair protein RecF from Pseudomonas entomophila (strain L48).